A 279-amino-acid chain; its full sequence is Orotidine 5'-phosphate decarboxylase (279 aa).

Residues Asp8, Lys30, 58–67 (DLKFHDIPNT), Thr117, Arg177, Gln186, Gly206, and Arg207 each bind substrate. Lys60 acts as the Proton donor in catalysis.

The protein belongs to the OMP decarboxylase family. Type 1 subfamily. In terms of assembly, homodimer.

The catalysed reaction is orotidine 5'-phosphate + H(+) = UMP + CO2. Its pathway is pyrimidine metabolism; UMP biosynthesis via de novo pathway; UMP from orotate: step 2/2. Functionally, catalyzes the decarboxylation of orotidine 5'-monophosphate (OMP) to uridine 5'-monophosphate (UMP). The sequence is that of Orotidine 5'-phosphate decarboxylase from Campylobacter jejuni subsp. jejuni serotype O:2 (strain ATCC 700819 / NCTC 11168).